Consider the following 488-residue polypeptide: (S)-canadine synthase CYP719A21 (488 aa).

The helical transmembrane segment at 6-26 (LWILTLISTILAVFAAVLIIF) threads the bilayer. A heme-binding site is contributed by cysteine 432.

Belongs to the cytochrome P450 family. The cofactor is heme.

It localises to the membrane. The enzyme catalyses (S)-tetrahydrocolumbamine + reduced [NADPH--hemoprotein reductase] + O2 = (S)-canadine + oxidized [NADPH--hemoprotein reductase] + 2 H2O + H(+). It participates in alkaloid biosynthesis. Its function is as follows. Cytochrome P450 involved in the biosynthesis of the benzylisoquinoline alkaloid noscapine. Converts (S)-tetrahydrocolumbamine to (S)-canadine. This Papaver somniferum (Opium poppy) protein is (S)-canadine synthase CYP719A21.